We begin with the raw amino-acid sequence, 1320 residues long: Centrosomin (1320 aa).

A disordered region spans residues 20–41 (ASFDVPRPPGGGNSPLPSQGRS). Positions 97–516 (RKTVDVKMEL…SSQEKEIKKL (420 aa)) form a coiled coil. Over residues 517-530 (NQENEQSANKENDC) the composition is skewed to basic and acidic residues. The interval 517–554 (NQENEQSANKENDCAKTVISPSSSGRSMSDNEASSQEM) is disordered. Positions 535 to 554 (ISPSSSGRSMSDNEASSQEM) are enriched in polar residues. The residue at position 545 (Ser-545) is a Phosphoserine. Coiled-coil stretches lie at residues 626–654 (EADL…KVDV) and 712–983 (NSLL…LKLA). Positions 644–656 (RNKLLQRKVDVLF) match the Nuclear localization signal motif. Residue Thr-782 is modified to Phosphothreonine. Ser-785 carries the post-translational modification Phosphoserine. Over residues 810-823 (KKELEKRRSSEGQR) the composition is skewed to basic and acidic residues. Disordered stretches follow at residues 810-849 (KKEL…SEPD) and 863-893 (SNSL…NRNS). The span at 831 to 843 (LPSQQFDNQSESE) shows a compositional bias: polar residues. Ser-874, Ser-876, Ser-878, Ser-1191, Ser-1234, Ser-1237, and Ser-1239 each carry phosphoserine. The segment at 1220-1249 (VEMKTEGSASPKAKSEESTSPDSKSNVATG) is disordered. The span at 1237-1247 (STSPDSKSNVA) shows a compositional bias: polar residues.

As to quaternary structure, monomer. In terms of tissue distribution, developing visceral mesoderm of the midgut, the central and peripheral nervous system, and developing gonads. Isoform J: Expressed in ovaries, testis and embryos. Isoform A: Expressed in testis only.

Its subcellular location is the cytoplasm. It is found in the cytoskeleton. It localises to the microtubule organizing center. The protein resides in the centrosome. The protein localises to the flagellum basal body. Its subcellular location is the perinuclear region. Its function is as follows. Core component of the centrosome throughout spermatogenesis. May participate in mitotic spindle assembly and the mechanics of morphogenesis through an interaction with microtubules, either directly or indirectly. Is a target of several homeotic genes. In Drosophila melanogaster (Fruit fly), this protein is Centrosomin (cnn).